Here is a 1251-residue protein sequence, read N- to C-terminus: Phospholipid-transporting ATPase IC (1251 aa).

The tract at residues 1 to 54 (MSTERDSETTFDEDSQPNDEVVPYSDDETEDELDDQGSAVEPEQNRVNREAEEN) is disordered. Residues 1–108 (MSTERDSETT…TYKYNAFTFI (108 aa)) are Cytoplasmic-facing. The span at 25-35 (SDDETEDELDD) shows a compositional bias: acidic residues. Residues 43–54 (EQNRVNREAEEN) are compositionally biased toward basic and acidic residues. A helical transmembrane segment spans residues 109-130 (PMNLFEQFKRAANLYFLALLIL). The Exoplasmic loop portion of the chain corresponds to 131 to 136 (QAVPQI). The chain crosses the membrane as a helical span at residues 137–156 (STLAWYTTLVPLLVVLGVTA). The Cytoplasmic portion of the chain corresponds to 157-340 (IKDLVDDVAR…TKIDYLMNYM (184 aa)). A helical membrane pass occupies residues 341–362 (VYTIFVVLILLSAGLAIGHAYW). Over 363–389 (EAQVGNSSWYLYDGEDDTPSYRGFLIF) the chain is Exoplasmic loop. The helical transmembrane segment at 390 to 411 (WGYIIVLNTMVPISLYVSVEVI) threads the bilayer. At 412 to 949 (RLGQSHFINW…GRWSYIRMCK (538 aa)) the chain is on the cytoplasmic side. Residue Asp-454 is the 4-aspartylphosphate intermediate of the active site. Positions 454, 455, 456, 555, 596, 619, 652, 732, 733, 734, 867, and 873 each coordinate ATP. Asp-454 contributes to the Mg(2+) binding site. A Mg(2+)-binding site is contributed by Thr-456. Asp-893 is a Mg(2+) binding site. 2 residues coordinate ATP: Asn-896 and Asp-897. Residue Asp-897 participates in Mg(2+) binding. Residues 950 to 970 (FLRYFFYKNFAFTLVHFWYSF) traverse the membrane as a helical segment. Over 971 to 982 (FNGYSAQTAYED) the chain is Exoplasmic loop. The helical transmembrane segment at 983 to 1002 (WFITLYNVLYTSLPVLLMGL) threads the bilayer. Over 1003-1032 (LDQDVSDKLSLRFPGLYIVGQRDLLFNYKR) the chain is Cytoplasmic. The helical transmembrane segment at 1033 to 1054 (FFVSLLHGVLTSMILFFIPLGA) threads the bilayer. Residues 1055–1068 (YLQTVGQDGEAPSD) lie on the Exoplasmic loop side of the membrane. The chain crosses the membrane as a helical span at residues 1069-1091 (YQSFAVTIASALVITVNFQIGLD). The Cytoplasmic segment spans residues 1092 to 1097 (TSYWTF). The chain crosses the membrane as a helical span at residues 1098 to 1118 (VNAFSIFGSIALYFGIMFDFH). At 1119–1138 (SAGIHVLFPSAFQFTGTASN) the chain is on the exoplasmic loop side. Residues 1139–1163 (ALRQPYIWLTIILAVAVCLLPVVAI) form a helical membrane-spanning segment. The Cytoplasmic segment spans residues 1164–1251 (RFLSMTIWPS…TAEYRRTGDS (88 aa)). A Phosphoserine modification is found at Ser-1223.

This sequence belongs to the cation transport ATPase (P-type) (TC 3.A.3) family. Type IV subfamily. In terms of assembly, component of a P4-ATPase flippase complex which consists of a catalytic alpha subunit ATP8B1 and an accessory beta subunit TMEM30A. The flippase ATP8B1:TMEM30A complex can form an intermediate phosphoenzyme in vitro. Also interacts with beta subunit TMEM30B. Mg(2+) is required as a cofactor. Found in most tissues except brain and skeletal muscle. Most abundant in pancreas and small intestine.

Its subcellular location is the cell membrane. It is found in the apical cell membrane. The protein resides in the cell projection. It localises to the stereocilium. The protein localises to the endoplasmic reticulum. Its subcellular location is the golgi apparatus. It catalyses the reaction ATP + H2O + phospholipidSide 1 = ADP + phosphate + phospholipidSide 2.. The catalysed reaction is a 1,2-diacyl-sn-glycero-3-phosphocholine(out) + ATP + H2O = a 1,2-diacyl-sn-glycero-3-phosphocholine(in) + ADP + phosphate + H(+). It carries out the reaction a 1,2-diacyl-sn-glycero-3-phospho-L-serine(out) + ATP + H2O = a 1,2-diacyl-sn-glycero-3-phospho-L-serine(in) + ADP + phosphate + H(+). Catalytic component of a P4-ATPase flippase complex which catalyzes the hydrolysis of ATP coupled to the transport of phospholipids, in particular phosphatidylcholines (PC), from the outer to the inner leaflet of the plasma membrane. May participate in the establishment of the canalicular membrane integrity by ensuring asymmetric distribution of phospholipids in the canicular membrane. Thus may have a role in the regulation of bile acids transport into the canaliculus, uptake of bile acids from intestinal contents into intestinal mucosa or both and protect hepatocytes from bile salts. Involved in the microvillus formation in polarized epithelial cells; the function seems to be independent from its flippase activity. Participates in correct apical membrane localization of CDC42, CFTR and SLC10A2. Enables CDC42 clustering at the apical membrane during enterocyte polarization through the interaction between CDC42 polybasic region and negatively charged membrane lipids provided by ATP8B1. Together with TMEM30A is involved in uptake of the synthetic drug alkylphospholipid perifosine. Required for the preservation of cochlear hair cells in the inner ear. May act as cardiolipin transporter during inflammatory injury. The sequence is that of Phospholipid-transporting ATPase IC from Homo sapiens (Human).